Here is a 120-residue protein sequence, read N- to C-terminus: uncharacterized protein (120 aa).

This is an uncharacterized protein from Allochromatium vinosum (strain ATCC 17899 / DSM 180 / NBRC 103801 / NCIMB 10441 / D) (Chromatium vinosum).